Reading from the N-terminus, the 246-residue chain is 3'(2'),5'-bisphosphate nucleotidase CysQ (246 aa).

The Mg(2+) site is built by Glu-64, Asp-83, Leu-85, Asp-86, and Asp-205. Glu-64 contacts substrate. Substrate contacts are provided by residues 85 to 88 (LDGT) and Asp-205.

Belongs to the inositol monophosphatase superfamily. CysQ family. It depends on Mg(2+) as a cofactor.

The protein localises to the cell inner membrane. The catalysed reaction is adenosine 3',5'-bisphosphate + H2O = AMP + phosphate. Inhibited by lithium and calcium. In terms of biological role, converts adenosine-3',5'-bisphosphate (PAP) to AMP. May also convert adenosine 3'-phosphate 5'-phosphosulfate (PAPS) to adenosine 5'-phosphosulfate (APS). Has 10000-fold lower activity towards inositol 1,4-bisphosphate (Ins(1,4)P2). The protein is 3'(2'),5'-bisphosphate nucleotidase CysQ of Escherichia coli (strain K12).